A 94-amino-acid chain; its full sequence is Small ribosomal subunit protein bS6 (94 aa).

The protein belongs to the bacterial ribosomal protein bS6 family.

In terms of biological role, binds together with bS18 to 16S ribosomal RNA. In Desulforudis audaxviator (strain MP104C), this protein is Small ribosomal subunit protein bS6.